Consider the following 102-residue polypeptide: Large ribosomal subunit protein uL24 (102 aa).

Belongs to the universal ribosomal protein uL24 family. Part of the 50S ribosomal subunit.

One of two assembly initiator proteins, it binds directly to the 5'-end of the 23S rRNA, where it nucleates assembly of the 50S subunit. In terms of biological role, one of the proteins that surrounds the polypeptide exit tunnel on the outside of the subunit. The protein is Large ribosomal subunit protein uL24 of Rhizobium leguminosarum bv. trifolii (strain WSM2304).